The following is a 212-amino-acid chain: Pyridoxine/pyridoxamine 5'-phosphate oxidase (212 aa).

Substrate-binding positions include Arg8–Tyr11 and Lys66. Residues Arg61 to Lys66, Phe76 to Thr77, Arg82, Lys83, and Gln105 contribute to the FMN site. Substrate is bound by residues Tyr123, Arg127, and Ser131. Residues Gln140–Ser141 and Trp185 each bind FMN. Arg191–His193 contributes to the substrate binding site. Residue Arg195 participates in FMN binding.

The protein belongs to the pyridoxamine 5'-phosphate oxidase family. As to quaternary structure, homodimer. It depends on FMN as a cofactor.

It carries out the reaction pyridoxamine 5'-phosphate + O2 + H2O = pyridoxal 5'-phosphate + H2O2 + NH4(+). The enzyme catalyses pyridoxine 5'-phosphate + O2 = pyridoxal 5'-phosphate + H2O2. Its pathway is cofactor metabolism; pyridoxal 5'-phosphate salvage; pyridoxal 5'-phosphate from pyridoxamine 5'-phosphate: step 1/1. It functions in the pathway cofactor metabolism; pyridoxal 5'-phosphate salvage; pyridoxal 5'-phosphate from pyridoxine 5'-phosphate: step 1/1. Its function is as follows. Catalyzes the oxidation of either pyridoxine 5'-phosphate (PNP) or pyridoxamine 5'-phosphate (PMP) into pyridoxal 5'-phosphate (PLP). This Shewanella frigidimarina (strain NCIMB 400) protein is Pyridoxine/pyridoxamine 5'-phosphate oxidase.